Here is a 561-residue protein sequence, read N- to C-terminus: Centromere protein T (561 aa).

Residues 1–78 (MADHNPDGDP…IGRSAHVQAR (78 aa)) are disordered. A compositionally biased stretch (basic and acidic residues) spans 18-27 (RVLDTADPRT). Over residues 45 to 57 (TASSRRLSGQTKT) the composition is skewed to polar residues. S47 bears the Phosphoserine mark. Residue T85 is modified to Phosphothreonine. Positions 93-421 (ILLTAPESSI…RHHQFPEPAP (329 aa)) are flexible stalk domain. 3 disordered regions span residues 114 to 134 (APQV…ELQL), 256 to 293 (HSLP…GKPA), and 314 to 457 (SSGV…DPHK). The span at 276–289 (RTQSSGPGLQNNSP) shows a compositional bias: polar residues. Residues 329 to 341 (GVEEAEKKMKEEG) are compositionally biased toward basic and acidic residues. Residues S343, S345, S356, S373, S385, S386, and S397 each carry the phosphoserine modification. Positions 365 to 376 (TQVTEAEGSQGT) are enriched in polar residues. Residues 439 to 450 (RCPPRSRTTGPR) show a composition bias toward low complexity.

The protein belongs to the CENP-T/CNN1 family. As to quaternary structure, component of the CENPA-CAD complex, composed of CENPI, CENPK, CENPL, CENPO, CENPP, CENPQ, CENPR and CENPS. The CENPA-CAD complex is probably recruited on centromeres by the CENPA-NAC complex, at least composed of CENPA, CENPC, CENPH, CENPM, CENPN, CENPT and CENPU. Identified in a centromeric complex containing histones H2A, H2B, H3 and H4, and at least CENPA, CENPB, CENPC, CENPT, CENPN, HJURP, SUPT16H, SSRP1 and RSF1. Interacts (via N-terminus) with the NDC80 complex. Heterodimer with CENPW; this dimer coassembles with CENPS-CENPX heterodimers at centromeres to form the tetrameric CENP-T-W-S-X complex. Dynamically phosphorylated during the cell cycle. Phosphorylated during G2 phase, metaphase and anaphase, but not during telophase or G1 phase.

The protein localises to the nucleus. It is found in the chromosome. It localises to the centromere. The protein resides in the kinetochore. Its function is as follows. Component of the CENPA-NAC (nucleosome-associated) complex, a complex that plays a central role in assembly of kinetochore proteins, mitotic progression and chromosome segregation. The CENPA-NAC complex recruits the CENPA-CAD (nucleosome distal) complex and may be involved in incorporation of newly synthesized CENPA into centromeres. Part of a nucleosome-associated complex that binds specifically to histone H3-containing nucleosomes at the centromere, as opposed to nucleosomes containing CENPA. Component of the heterotetrameric CENP-T-W-S-X complex that binds and supercoils DNA, and plays an important role in kinetochore assembly. CENPT has a fundamental role in kinetochore assembly and function. It is one of the inner kinetochore proteins, with most further proteins binding downstream. Required for normal chromosome organization and normal progress through mitosis. In Macaca fascicularis (Crab-eating macaque), this protein is Centromere protein T (CENPT).